Reading from the N-terminus, the 331-residue chain is Anthranilate phosphoribosyltransferase (331 aa).

5-phospho-alpha-D-ribose 1-diphosphate-binding positions include Gly-79, 82 to 83 (GD), Ser-87, 89 to 92 (NIST), 107 to 115 (KHCNTSISS), and Ser-119. Gly-79 provides a ligand contact to anthranilate. Ser-91 contributes to the Mg(2+) binding site. Asn-110 provides a ligand contact to anthranilate. An anthranilate-binding site is contributed by Arg-165. Asp-223 and Glu-224 together coordinate Mg(2+).

It belongs to the anthranilate phosphoribosyltransferase family. As to quaternary structure, homodimer. Mg(2+) is required as a cofactor.

The catalysed reaction is N-(5-phospho-beta-D-ribosyl)anthranilate + diphosphate = 5-phospho-alpha-D-ribose 1-diphosphate + anthranilate. It functions in the pathway amino-acid biosynthesis; L-tryptophan biosynthesis; L-tryptophan from chorismate: step 2/5. In terms of biological role, catalyzes the transfer of the phosphoribosyl group of 5-phosphorylribose-1-pyrophosphate (PRPP) to anthranilate to yield N-(5'-phosphoribosyl)-anthranilate (PRA). The protein is Anthranilate phosphoribosyltransferase of Buchnera aphidicola subsp. Schlechtendalia chinensis.